Reading from the N-terminus, the 200-residue chain is Recombination protein RecR (200 aa).

Residues 58–75 form a C4-type zinc finger; the sequence is CPCCFCLKNFPESQCEFC. The 96-residue stretch at 82–177 folds into the Toprim domain; that stretch reads STLCIVASPK…SISRLALGLP (96 aa).

Belongs to the RecR family.

Functionally, may play a role in DNA repair. It seems to be involved in an RecBC-independent recombinational process of DNA repair. It may act with RecF and RecO. This is Recombination protein RecR from Chlamydia felis (strain Fe/C-56) (Chlamydophila felis).